Reading from the N-terminus, the 200-residue chain is Snake venom metalloproteinase hemorrhagic factor 2 (200 aa).

The Peptidase M12B domain occupies Lys4–Pro200. Residue Glu7 participates in Ca(2+) binding. Asn70 carries N-linked (GlcNAc...) asparagine glycosylation. Residue Asp91 coordinates Ca(2+). 3 disulfide bridges follow: Cys115–Cys195, Cys155–Cys179, and Cys157–Cys162. Zn(2+) is bound at residue His140. Glu141 is an active-site residue. Zn(2+) contacts are provided by His144 and His150. Cys195 and Asn198 together coordinate Ca(2+).

Belongs to the venom metalloproteinase (M12B) family. P-I subfamily. Monomer. It depends on Zn(2+) as a cofactor. As to expression, expressed by the venom gland.

It localises to the secreted. Its function is as follows. Snake venom zinc metalloproteinase that induces weak hemorrhage and mild myonecrosis. Shows mild myotoxicity by killing myocytes. Also induces edema in the mouse footpad at doses where hemorrhage is absent. In vitro, degrades laminin, fibronectin, and type IV collagen, suggesting this toxin play a role in local tissue damage by degrading extracellular matrix, and possibly by degrading muscle extracellular matrix. Hemorrhage is not due to cytotoxicity towards endothelial cells in culture, and may only play a minor role in local bleeding characteristic of L.muta envenomations. Also induces the synthesis of several endogenous matrix metalloproteinases, which in turn, may participate in extracellular matrix degradation. The protein is Snake venom metalloproteinase hemorrhagic factor 2 of Lachesis muta muta (Bushmaster).